Consider the following 3147-residue polypeptide: Bassianolide nonribosomal cyclodepsipeptide synthetase (3147 aa).

Residues 1–12 show a composition bias toward polar residues; that stretch reads MEPPNNANTGQL. A disordered region spans residues 1–23; that stretch reads MEPPNNANTGQLGPTLPNGTVDL. The tract at residues 69-454 is condensation 1; sequence HVVYEIPEDV…INKLQSTDGS (386 aa). An adenylation 1 region spans residues 495–887; it reads DDTPNKPAVC…GRMDSQVKIR (393 aa). One can recognise a Carrier 1 domain in the interval 1015–1091; the sequence is PDASAGVTKL…SLQAAIGGSS (77 aa). Residue S1052 is modified to O-(pantetheine 4'-phosphoryl)serine. The segment at 1109 to 1538 is condensation 2; that stretch reads SYSQGRLWFL…QTLISVVPLT (430 aa). The segment at 1567 to 1973 is adenylation 2; it reads FATQVASYPD…GRMDFQFKIR (407 aa). Residues 2041–2181 are S-adenosyl-L-methionine-dependent N-methyltransferase (MT); that stretch reads TYTELDTVSS…FPTRDYLEQV (141 aa). 2 Carrier domains span residues 2515–2589 and 2615–2689; these read FPLS…RQQL and APTT…EVSQ. Residues S2549 and S2649 each carry the O-(pantetheine 4'-phosphoryl)serine modification. The condensation 3 stretch occupies residues 2735–3139; the sequence is QDVYLATHLQ…THLMEQVCNT (405 aa).

Belongs to the NRP synthetase family.

Bassianolide nonribosomal synthetase that mediates the biosynthesis of bassianolide (BSL), a non-ribosomal cyclodepsipeptide that shows insecticidal and cancer cell antiproliferative activity. BSLS first catalyzes the iterative synthesis of an enzyme-bound dipeptidol monomer intermediate from D-2-hydroxyisovalerate and L-leucine before performing the condensation and cyclization of 4 dipeptidol monomers to yield the cyclic tetrameric ester bassianolide. The N-methyltransferase MT domain is responsible for the methylation of the leucine residues of bassianolide. BSLS is flexible with both the amino acid and hydroxyl acid precursors, and produces bassianolide as the major product (containing N-methyl-L-Leu), together with small amounts of beauvericin and its analogs beauvericins A-C (containing N-methyl-L-Phe). In Beauveria bassiana (strain ARSEF 2860) (White muscardine disease fungus), this protein is Bassianolide nonribosomal cyclodepsipeptide synthetase.